The primary structure comprises 350 residues: Enoyl-[acyl-carrier-protein] reductase, mitochondrial (350 aa).

The N-terminal 14 residues, methionine 1–tyrosine 14, are a transit peptide targeting the mitochondrion. The active-site Proton donor is the tyrosine 69. NADP(+) contacts are provided by residues asparagine 143, asparagine 169–valine 172, arginine 192–glycine 194, tyrosine 261–methionine 264, phenylalanine 286–leucine 288, and lysine 343.

Belongs to the zinc-containing alcohol dehydrogenase family. Quinone oxidoreductase subfamily. As to quaternary structure, homodimer.

The protein resides in the mitochondrion. It catalyses the reaction a 2,3-saturated acyl-[ACP] + NADP(+) = a (2E)-enoyl-[ACP] + NADPH + H(+). Its function is as follows. Catalyzes the NADPH-dependent reduction of trans-2-enoyl thioesters in mitochondrial fatty acid synthesis (fatty acid synthesis type II). Fatty acid chain elongation in mitochondria uses acyl carrier protein (ACP) as an acyl group carrier, but the enzyme accepts both ACP and CoA thioesters as substrates in vitro. In Dictyostelium discoideum (Social amoeba), this protein is Enoyl-[acyl-carrier-protein] reductase, mitochondrial (mecr).